The chain runs to 413 residues: MINYNKKTLKDVDLKDKTVIVRVDFNVPIKDNKVIDDTRIVQALDTIKYLIEQNCKIVLLSHLSRIKSLEDISSKKKSLRPVYENLKTKLNNVKFLEENVGYDVVEAVKQLKHQEVLLLENTRYNDVDNQGEVVKKESKNSPELGRFWASLADVFVNDAFGTSHRAHASNVGIAANISQSCIGFLVQKELEALSKLTNNPQRPFVVILGGAKVSDKLKVIESLLKSADQILIGGGMVNTFNKAKGYHIGKSLFEPEMLETAKKILAEDKDNKIILATDQMVTKASTITDIKTAPAGKCVFAKDEAENEDFEALDIGDESIKTFKSYIAKAKSIFWNGPLGVFENPNYERGSYEIAKAISESDSYSVIGGGDSAAAANQFKLADKFSFVSTGGGASLTFMEQTVLPGIEAIQSK.

Substrate-binding positions include 24 to 26 (DFN), R39, 62 to 65 (HLSR), R123, and R165. ATP is bound by residues K216, E343, and 369–372 (GGDS).

The protein belongs to the phosphoglycerate kinase family. In terms of assembly, monomer.

It is found in the cytoplasm. The enzyme catalyses (2R)-3-phosphoglycerate + ATP = (2R)-3-phospho-glyceroyl phosphate + ADP. The protein operates within carbohydrate degradation; glycolysis; pyruvate from D-glyceraldehyde 3-phosphate: step 2/5. The chain is Phosphoglycerate kinase from Mycoplasmoides gallisepticum (strain R(low / passage 15 / clone 2)) (Mycoplasma gallisepticum).